A 269-amino-acid chain; its full sequence is Phosphate import ATP-binding protein PstB (269 aa).

Residues Ile23–Ile264 form the ABC transporter domain. ATP is bound at residue Gly55–Ser62.

The protein belongs to the ABC transporter superfamily. Phosphate importer (TC 3.A.1.7) family. As to quaternary structure, the complex is composed of two ATP-binding proteins (PstB), two transmembrane proteins (PstC and PstA) and a solute-binding protein (PstS).

It localises to the cell inner membrane. The catalysed reaction is phosphate(out) + ATP + H2O = ADP + 2 phosphate(in) + H(+). Its function is as follows. Part of the ABC transporter complex PstSACB involved in phosphate import. Responsible for energy coupling to the transport system. This is Phosphate import ATP-binding protein PstB from Xylella fastidiosa (strain Temecula1 / ATCC 700964).